Here is a 177-residue protein sequence, read N- to C-terminus: Large ribosomal subunit protein uL6 (177 aa).

Belongs to the universal ribosomal protein uL6 family. As to quaternary structure, part of the 50S ribosomal subunit.

Its function is as follows. This protein binds to the 23S rRNA, and is important in its secondary structure. It is located near the subunit interface in the base of the L7/L12 stalk, and near the tRNA binding site of the peptidyltransferase center. The protein is Large ribosomal subunit protein uL6 of Edwardsiella ictaluri (strain 93-146).